The sequence spans 246 residues: Alpha-tubulin N-acetyltransferase (246 aa).

An N-acetyltransferase domain is found at 21–202 (LTLVPDGVSR…NNFVVFHSFF (182 aa)). Acetyl-CoA contacts are provided by residues 135-148 (FYVD…GYGK) and 172-181 (SNKLLGFLRK).

The protein belongs to the acetyltransferase ATAT1 family.

The catalysed reaction is L-lysyl-[alpha-tubulin] + acetyl-CoA = N(6)-acetyl-L-lysyl-[alpha-tubulin] + CoA + H(+). In terms of biological role, specifically acetylates 'Lys-40' in alpha-tubulin on the lumenal side of microtubules. Promotes microtubule destabilization and accelerates microtubule dynamics; this activity may be independent of acetylation activity. Acetylates alpha-tubulin with a slow enzymatic rate, due to a catalytic site that is not optimized for acetyl transfer. Enters the microtubule through each end and diffuses quickly throughout the lumen of microtubules. Acetylates only long/old microtubules because of its slow acetylation rate since it does not have time to act on dynamically unstable microtubules before the enzyme is released. This chain is Alpha-tubulin N-acetyltransferase, found in Leishmania infantum.